The chain runs to 224 residues: Serum amyloid P-component (224 aa).

The N-terminal stretch at 1 to 20 is a signal peptide; it reads MDKLLLWMFVFTSLLSEAFC. A Pentraxin (PTX) domain is found at 25–224; sequence KRKVFVFPRE…YVVIRPRVWD (200 aa). N52 carries an N-linked (GlcNAc...) asparagine glycan. A disulfide bridge links C56 with C115. Ca(2+) contacts are provided by D78, N79, E156, Q157, D158, and Q168.

It belongs to the pentraxin family. Homopentamer. Pentraxin (or pentaxin) have a discoid arrangement of 5 non-covalently bound subunits. It depends on Ca(2+) as a cofactor.

It is found in the secreted. The chain is Serum amyloid P-component (Apcs) from Mus musculus (Mouse).